The following is a 20-amino-acid chain: Endo-1,6-beta-glucanase (20 aa).

The protein belongs to the glycosyl hydrolase 5 (cellulase A) family.

It is found in the secreted. It localises to the extracellular space. It catalyses the reaction Random hydrolysis of (1-&gt;6)-linkages in (1-&gt;6)-beta-D-glucans.. In terms of biological role, endo-1,6-beta-glucanase that has highest activity against the beta-1,6-glucan pustulan. Also active against the beta-1,6-glucan lutean. Lower activity against laminarin (beta-1,3-glucan with beta-1,6-branches). Little or no activity against gentiobiose, yeast glucan, lichenin, scleroglucan, curdlan, barley glucan, CM cellulose, HE cellulose, pachyman and pullulan. This chain is Endo-1,6-beta-glucanase, found in Acremonium sp.